Consider the following 87-residue polypeptide: MKGVCTRKVLYFFMAVILFVAIVASEDTENRNPAMAMPLQRMEQEVEKVSSRCGPVACPGRFCGSDLGACRPPWCCRGCSCSFCCKL.

An N-terminal signal peptide occupies residues 1-25 (MKGVCTRKVLYFFMAVILFVAIVAS). A propeptide spanning residues 26-45 (EDTENRNPAMAMPLQRMEQE) is cleaved from the precursor.

It belongs to the xibalbin-2 family. Post-translationally, contains 5 disulfide bonds. In terms of tissue distribution, expressed by the venom gland. Not found in the whole body.

The protein resides in the secreted. In terms of biological role, probable neurotoxin. Moderately inhibits voltage-gated potassium channels (Kv1.1/KCNA1, Kv1.2/KCNA2, Kv1.3/KCNA3, and Kv1.6/KCNA6, with the highest toxicity against Kv1.6 (73.2% inhibition at 1 uM)) and weakly inhibits sodium channels (Nav1.4/SCN4A). Does not activate protein kinase A type II (PKA-II) and MAP kinase Erk1/2 in sensory neurons. Does not show cytotoxic activity. Does not have an impact on Ca2+, cAMP, and NO signaling in the cell types analyzed. Does not interfere with the adhesion of leukocytes to endothelial cells. Its function is as follows. Moderately inhibits voltage-gated potassium channels (Kv1.1/KCNA1, Kv1.2/KCNA2, Kv1.3/KCNA3, and Kv1.6/KCNA6, with the highest toxicity against Kv1.6 (75.9% inhibition at 1 uM)). Does not activate protein kinase A type II (PKA-II) and MAP kinase Erk1/2 in sensory neurons. Does not show cytotoxic activity. Does not have an impact on Ca2+, cAMP, and NO signaling in the cell types analyzed. Does not interfere with the adhesion of leukocytes to endothelial cells. This chain is Xibalbin-2, found in Xibalbanus tulumensis (Blind cave remipede).